The primary structure comprises 117 residues: Immunoglobulin kappa variable 1-9 (117 aa).

A signal peptide spans 1-22; the sequence is MDMRVPAQLLGLLLLWLPGARC. A framework-1 region spans residues 23–45; the sequence is DIQLTQSPSFLSASVGDRVTITC. Positions 24–117 constitute an Ig-like domain; that stretch reads IQLTQSPSFL…YYCQQLNSYP (94 aa). An intrachain disulfide couples cysteine 45 to cysteine 110. The complementarity-determining-1 stretch occupies residues 46–56; sequence RASQGISSYLA. The framework-2 stretch occupies residues 57–71; it reads WYQQKPGKAPKLLIY. Positions 72-78 are complementarity-determining-2; that stretch reads AASTLQS. The segment at 79–110 is framework-3; it reads GVPSRFSGSGSGTEFTLTISSLQPEDFATYYC. The complementarity-determining-3 stretch occupies residues 111-117; sequence QQLNSYP.

Immunoglobulins are composed of two identical heavy chains and two identical light chains; disulfide-linked.

Its subcellular location is the secreted. It is found in the cell membrane. In terms of biological role, v region of the variable domain of immunoglobulin light chains that participates in the antigen recognition. Immunoglobulins, also known as antibodies, are membrane-bound or secreted glycoproteins produced by B lymphocytes. In the recognition phase of humoral immunity, the membrane-bound immunoglobulins serve as receptors which, upon binding of a specific antigen, trigger the clonal expansion and differentiation of B lymphocytes into immunoglobulins-secreting plasma cells. Secreted immunoglobulins mediate the effector phase of humoral immunity, which results in the elimination of bound antigens. The antigen binding site is formed by the variable domain of one heavy chain, together with that of its associated light chain. Thus, each immunoglobulin has two antigen binding sites with remarkable affinity for a particular antigen. The variable domains are assembled by a process called V-(D)-J rearrangement and can then be subjected to somatic hypermutations which, after exposure to antigen and selection, allow affinity maturation for a particular antigen. This chain is Immunoglobulin kappa variable 1-9, found in Homo sapiens (Human).